We begin with the raw amino-acid sequence, 277 residues long: Energy-coupling factor transporter ATP-binding protein EcfA1 (277 aa).

Positions 5–240 constitute an ABC transporter domain; the sequence is LEVENLVFKY…SEDMVEIGLD (236 aa). 40–47 is an ATP binding site; that stretch reads GQNGSGKS.

This sequence belongs to the ABC transporter superfamily. Energy-coupling factor EcfA family. As to quaternary structure, forms a stable energy-coupling factor (ECF) transporter complex composed of 2 membrane-embedded substrate-binding proteins (S component), 2 ATP-binding proteins (A component) and 2 transmembrane proteins (T component).

The protein resides in the cell membrane. In terms of biological role, ATP-binding (A) component of a common energy-coupling factor (ECF) ABC-transporter complex. Unlike classic ABC transporters this ECF transporter provides the energy necessary to transport a number of different substrates. The polypeptide is Energy-coupling factor transporter ATP-binding protein EcfA1 (Lactococcus lactis subsp. lactis (strain IL1403) (Streptococcus lactis)).